The chain runs to 458 residues: Cysteine--tRNA ligase (458 aa).

Cys29 provides a ligand contact to Zn(2+). The short motif at Met31–His41 is the 'HIGH' region element. Zn(2+) is bound by residues Cys213, His238, and Glu242. A 'KMSKS' region motif is present at residues Lys270 to Ser274. ATP is bound at residue Lys273.

The protein belongs to the class-I aminoacyl-tRNA synthetase family. In terms of assembly, monomer. The cofactor is Zn(2+).

Its subcellular location is the cytoplasm. It catalyses the reaction tRNA(Cys) + L-cysteine + ATP = L-cysteinyl-tRNA(Cys) + AMP + diphosphate. The protein is Cysteine--tRNA ligase of Acidovorax ebreus (strain TPSY) (Diaphorobacter sp. (strain TPSY)).